Reading from the N-terminus, the 928-residue chain is Kinesin heavy chain (928 aa).

The Kinesin motor domain occupies 7-330; it reads SIKVVARFRP…LRFGMRAKSI (324 aa). ATP-binding positions include 88–95 and 238–245; these read GQTGAGKS and GSEKVGKT. A coiled-coil region spans residues 343-866; that stretch reads AELKQMLAKA…VKDRLEAAKA (524 aa). Residues 395 to 409 show a composition bias toward low complexity; it reads SKSASTTARPSTPSR. Disordered regions lie at residues 395–434 and 893–928; these read SKSA…PLDK and GGGD…FQKS. Over residues 905-928 the composition is skewed to polar residues; the sequence is NPTIATLQQNPPENKRSSWFFQKS.

Belongs to the TRAFAC class myosin-kinesin ATPase superfamily. Kinesin family. Kinesin subfamily.

Its subcellular location is the cytoplasm. It is found in the cytoskeleton. Its function is as follows. Kinesin is a microtubule-associated force-producing protein that may play a role in organelle transport. Its motor activity is directed toward the microtubule's plus end. This chain is Kinesin heavy chain (kin), found in Neurospora crassa (strain ATCC 24698 / 74-OR23-1A / CBS 708.71 / DSM 1257 / FGSC 987).